A 603-amino-acid chain; its full sequence is Elongation factor 4 (603 aa).

The region spanning 7 to 189 (VRIRNFCIIA…AVVERIPPPP (183 aa)) is the tr-type G domain. GTP-binding positions include 19-24 (DHGKST) and 136-139 (NKID).

The protein belongs to the TRAFAC class translation factor GTPase superfamily. Classic translation factor GTPase family. LepA subfamily.

It localises to the cell inner membrane. It carries out the reaction GTP + H2O = GDP + phosphate + H(+). Required for accurate and efficient protein synthesis under certain stress conditions. May act as a fidelity factor of the translation reaction, by catalyzing a one-codon backward translocation of tRNAs on improperly translocated ribosomes. Back-translocation proceeds from a post-translocation (POST) complex to a pre-translocation (PRE) complex, thus giving elongation factor G a second chance to translocate the tRNAs correctly. Binds to ribosomes in a GTP-dependent manner. In Trichormus variabilis (strain ATCC 29413 / PCC 7937) (Anabaena variabilis), this protein is Elongation factor 4.